The sequence spans 366 residues: Chorismate synthase (366 aa).

Arginine 48 is a binding site for NADP(+). FMN-binding positions include 125 to 127 (RSS), 241 to 242 (NA), glycine 285, 300 to 304 (KPTSS), and arginine 326.

It belongs to the chorismate synthase family. In terms of assembly, homotetramer. It depends on FMNH2 as a cofactor.

It carries out the reaction 5-O-(1-carboxyvinyl)-3-phosphoshikimate = chorismate + phosphate. Its pathway is metabolic intermediate biosynthesis; chorismate biosynthesis; chorismate from D-erythrose 4-phosphate and phosphoenolpyruvate: step 7/7. Its function is as follows. Catalyzes the anti-1,4-elimination of the C-3 phosphate and the C-6 proR hydrogen from 5-enolpyruvylshikimate-3-phosphate (EPSP) to yield chorismate, which is the branch point compound that serves as the starting substrate for the three terminal pathways of aromatic amino acid biosynthesis. This reaction introduces a second double bond into the aromatic ring system. The protein is Chorismate synthase of Ruegeria pomeroyi (strain ATCC 700808 / DSM 15171 / DSS-3) (Silicibacter pomeroyi).